The primary structure comprises 311 residues: Methionyl-tRNA formyltransferase (311 aa).

110 to 113 lines the (6S)-5,6,7,8-tetrahydrofolate pocket; sequence SLLP.

This sequence belongs to the Fmt family.

It catalyses the reaction L-methionyl-tRNA(fMet) + (6R)-10-formyltetrahydrofolate = N-formyl-L-methionyl-tRNA(fMet) + (6S)-5,6,7,8-tetrahydrofolate + H(+). Its function is as follows. Attaches a formyl group to the free amino group of methionyl-tRNA(fMet). The formyl group appears to play a dual role in the initiator identity of N-formylmethionyl-tRNA by promoting its recognition by IF2 and preventing the misappropriation of this tRNA by the elongation apparatus. The sequence is that of Methionyl-tRNA formyltransferase from Streptococcus pyogenes serotype M49 (strain NZ131).